Reading from the N-terminus, the 504-residue chain is Peptidyl-prolyl cis-trans isomerase-like 4 (504 aa).

The PPIase cyclophilin-type domain occupies 1-169 (MSVMLETSLG…QNIRIRHVEI (169 aa)). The region spanning 246–324 (NILFVCKLNP…RRIWVDFSQS (79 aa)) is the RRM domain. Polar residues predominate over residues 330–339 (RSMLSSSNPT). Positions 330-504 (RSMLSSSNPT…RERDDRDRRR (175 aa)) are disordered. Residues 340 to 354 (GRGGRGGRGGRGGNY) are compositionally biased toward gly residues. Composition is skewed to basic and acidic residues over residues 356 to 381 (GRRD…DSRR) and 416 to 504 (SKRD…DRRR).

This sequence belongs to the cyclophilin-type PPIase family. PPIL4 subfamily.

Its subcellular location is the nucleus. It catalyses the reaction [protein]-peptidylproline (omega=180) = [protein]-peptidylproline (omega=0). In terms of biological role, PPIases accelerate the folding of proteins. It catalyzes the cis-trans isomerization of proline imidic peptide bonds in oligopeptides. The protein is Peptidyl-prolyl cis-trans isomerase-like 4 (CYP6) of Cryptococcus neoformans var. neoformans serotype D (strain B-3501A) (Filobasidiella neoformans).